The sequence spans 586 residues: Proteasome-associated ATPase (586 aa).

Residues Ala-11–Gln-76 adopt a coiled-coil conformation. Gly-273–Leu-278 serves as a coordination point for ATP. Positions Tyr-585–Leu-586 are docks into pockets in the proteasome alpha-ring.

Belongs to the AAA ATPase family. As to quaternary structure, homohexamer. Assembles into a hexameric ring structure that caps the 20S proteasome core. Strongly interacts with the prokaryotic ubiquitin-like protein Pup through a hydrophobic interface; the interacting region of ARC lies in its N-terminal coiled-coil domain. There is one Pup binding site per ARC hexamer ring. Upon ATP-binding, the C-terminus of ARC interacts with the alpha-rings of the proteasome core, possibly by binding to the intersubunit pockets.

Its pathway is protein degradation; proteasomal Pup-dependent pathway. In terms of biological role, ATPase which is responsible for recognizing, binding, unfolding and translocation of pupylated proteins into the bacterial 20S proteasome core particle. May be essential for opening the gate of the 20S proteasome via an interaction with its C-terminus, thereby allowing substrate entry and access to the site of proteolysis. Thus, the C-termini of the proteasomal ATPase may function like a 'key in a lock' to induce gate opening and therefore regulate proteolysis. The sequence is that of Proteasome-associated ATPase from Nocardia farcinica (strain IFM 10152).